Consider the following 1205-residue polypeptide: Plasma membrane calcium-transporting ATPase 1 (1205 aa).

The Cytoplasmic portion of the chain corresponds to 2 to 104 (GDMANNSVAY…KTFLQLVWEA (103 aa)). Residues 94 to 111 (PKTFLQLVWEALQDVTLI) are calmodulin-binding subdomain A. Residues 105 to 125 (LQDVTLIILEIAAVVSLGLSF) form a helical membrane-spanning segment. Over 126–153 (YQPPGGNEALCGSVNVGEEEEESEAGWI) the chain is Extracellular. Residues 154 to 174 (EGAAILLSVVCVVLVTAFNDW) form a helical membrane-spanning segment. The Cytoplasmic portion of the chain corresponds to 175-351 (SKEKQFRGLQ…KEKSVLQGKL (177 aa)). The segment at 296-343 (EEEKEKEKKDKKTKAQDGAAMEMQPLKSEDGVDGDEKDKKRSNLPKKE) is disordered. Composition is skewed to basic and acidic residues over residues 300–310 (EKEKKDKKTKA) and 322–343 (KSED…PKKE). A helical membrane pass occupies residues 352–371 (TKLAVQIGKAGLLMSAITVI). Over 372-403 (ILVLYFVIDTSWVQKRPWLAECTPIYIQYFVK) the chain is Extracellular. Residues 404 to 424 (FFIIGVTVLVVAVPEGLPLAV) traverse the membrane as a helical segment. Residues 425–840 (TISLAYSVKK…RNVYDSISKF (416 aa)) are Cytoplasmic-facing. Aspartate 460 acts as the 4-aspartylphosphate intermediate in catalysis. Residues aspartate 460, threonine 462, and aspartate 782 each coordinate Mg(2+). Residues 841–861 (LQFQLTVNVVAVIVAFTGACI) traverse the membrane as a helical segment. Over 862 to 868 (TQDSPLK) the chain is Extracellular. The chain crosses the membrane as a helical span at residues 869–889 (AVQMLWVNLIMDTLASLALAT). Residues 890 to 912 (EPPTEALLLRKPYGRNKPLISRT) lie on the Cytoplasmic side of the membrane. The helical transmembrane segment at 913–933 (MMKNILGHAFYQLVVVFTLLF) threads the bilayer. At 934–956 (AGEKIFDIDSGRNAPLHAPPSEH) the chain is on the extracellular side. A helical membrane pass occupies residues 957-976 (YTIVFNTFVMMQLFNEINAR). The Cytoplasmic segment spans residues 977–990 (KIHGERNVFEGIFN). The chain crosses the membrane as a helical span at residues 991 to 1012 (NAIFCTIVLGTFVVQIIIVQFG). At 1013–1024 (GKPFSCSKLSIE) the chain is on the extracellular side. The helical transmembrane segment at 1025 to 1045 (QWLWSVFLGMGTLLWGQLIST) threads the bilayer. Over 1046–1205 (IPTSRLKFLK…SPLHSLETSL (160 aa)) the chain is Cytoplasmic. Threonine 1101 is subject to Phosphothreonine; by PKC. The interval 1145-1205 (PLIDDTDAED…SPLHSLETSL (61 aa)) is disordered. The span at 1183–1205 (TDMNKSATSSSPGSPLHSLETSL) shows a compositional bias: polar residues.

Belongs to the cation transport ATPase (P-type) (TC 3.A.3) family. Type IIB subfamily.

Its subcellular location is the cell membrane. It carries out the reaction Ca(2+)(in) + ATP + H2O = Ca(2+)(out) + ADP + phosphate + H(+). In terms of biological role, catalyzes the hydrolysis of ATP coupled with the transport of calcium from the cytoplasm to the extracellular space thereby maintaining intracellular calcium homeostasis. This is Plasma membrane calcium-transporting ATPase 1 from Gallus gallus (Chicken).